The chain runs to 1506 residues: ABC transporter C family member 9 (1506 aa).

The next 11 membrane-spanning stretches (helical) occupy residues 37 to 57, 84 to 104, 116 to 136, 150 to 170, 179 to 199, 315 to 335, 350 to 370, 427 to 447, 452 to 472, 541 to 561, and 567 to 587; these read MQVTFLAFFLIHLALKWFGVV, ISLLCSVSILGTHCFILLLLF, VSVFSAEVSQSFSWLFVSVVV, MLRSWWLCSFILSFSFDAHFI, FQDYADLTGLLASLFLLAVSI, AINAVFAVVNASTAYIGPYLI, LNHGYLLALGFLTAKIVETVT, FIWYVNNIWMLPIQIFSAIYI, LGLGALAALVTTLMVMACNYP, FILWGAPSLISVVTFVTCMLM, and AGAVLSALATFQMLQSPIFGL. The region spanning 314-596 is the ABC transmembrane type-1 1 domain; sequence AAINAVFAVV…LPDLLSALVQ (283 aa). The region spanning 630-853 is the ABC transporter 1 domain; the sequence is VEIENGAFSW…NIGFEVLVGA (224 aa). 665–672 is an ATP binding site; sequence GAVGSGKS. 5 consecutive transmembrane segments (helical) span residues 934-956, 976-996, 1048-1068, 1167-1187, and 1191-1211; these read LLVPFIILAQSCFQMLQIASNYW, ILLVYALLAAGSSLCVLARTI, MAVKLGWCAFSIIQIVGTIFV, LSHFVFAFSLVLLVTLPEGVI, and IAGLGVTYGLSLNVLQATVIW. An ABC transmembrane type-1 2 domain is found at 936-1218; it reads VPFIILAQSC…VIWNICNAEN (283 aa). One can recognise an ABC transporter 2 domain in the interval 1257–1489; the sequence is FRDLQVRYAE…EDSFFSKLIK (233 aa). Residue 1289–1296 participates in ATP binding; it reads GRTGSGKS.

This sequence belongs to the ABC transporter superfamily. ABCC family. Conjugate transporter (TC 3.A.1.208) subfamily. Ubiquitous.

The protein localises to the membrane. The catalysed reaction is ATP + H2O + xenobioticSide 1 = ADP + phosphate + xenobioticSide 2.. In terms of biological role, pump for glutathione S-conjugates. In Arabidopsis thaliana (Mouse-ear cress), this protein is ABC transporter C family member 9 (ABCC9).